We begin with the raw amino-acid sequence, 86 residues long: Small ribosomal subunit protein bS20 (86 aa).

The segment covering 1–11 has biased composition (basic residues); that stretch reads MANHKSALKRA. Residues 1–27 are disordered; that stretch reads MANHKSALKRARQNEERRIRNRARKTR.

It belongs to the bacterial ribosomal protein bS20 family.

In terms of biological role, binds directly to 16S ribosomal RNA. The sequence is that of Small ribosomal subunit protein bS20 from Syntrophobacter fumaroxidans (strain DSM 10017 / MPOB).